Reading from the N-terminus, the 246-residue chain is PARP-type zinc finger-containing protein C2A9.07c (246 aa).

Residues 8 to 99 form a PARP-type; degenerate zinc finger; the sequence is YRVELAKTGR…EKILRAFEQG (92 aa). The span at 103-126 shows a compositional bias: basic and acidic residues; sequence EEDEERCRKMASDASEEKDRKIEE. Positions 103-246 are disordered; sequence EEDEERCRKM…ESGNEYSDSD (144 aa). Position 130 is a phosphothreonine (threonine 130). At serine 131 the chain carries Phosphoserine. The segment covering 157-168 has biased composition (basic residues); it reads NKKHKAERKRSP. Over residues 175–184 the composition is skewed to acidic residues; the sequence is LEDDEEIEDV. Over residues 185–196 the composition is skewed to basic and acidic residues; the sequence is ASDKDEEEKPWS. The span at 197–215 shows a compositional bias: acidic residues; sequence GDEEDDDELVVKDSEDETE. A phosphoserine mark is found at serine 243 and serine 245.

Its subcellular location is the nucleus. The protein resides in the mitochondrion. The polypeptide is PARP-type zinc finger-containing protein C2A9.07c (Schizosaccharomyces pombe (strain 972 / ATCC 24843) (Fission yeast)).